Reading from the N-terminus, the 370-residue chain is 4-hydroxy-3-methylbut-2-en-1-yl diphosphate synthase (flavodoxin) (370 aa).

The [4Fe-4S] cluster site is built by cysteine 268, cysteine 271, cysteine 303, and glutamate 310.

The protein belongs to the IspG family. It depends on [4Fe-4S] cluster as a cofactor.

It carries out the reaction (2E)-4-hydroxy-3-methylbut-2-enyl diphosphate + oxidized [flavodoxin] + H2O + 2 H(+) = 2-C-methyl-D-erythritol 2,4-cyclic diphosphate + reduced [flavodoxin]. Its pathway is isoprenoid biosynthesis; isopentenyl diphosphate biosynthesis via DXP pathway; isopentenyl diphosphate from 1-deoxy-D-xylulose 5-phosphate: step 5/6. Converts 2C-methyl-D-erythritol 2,4-cyclodiphosphate (ME-2,4cPP) into 1-hydroxy-2-methyl-2-(E)-butenyl 4-diphosphate. The chain is 4-hydroxy-3-methylbut-2-en-1-yl diphosphate synthase (flavodoxin) from Bacillus cereus (strain G9842).